Consider the following 77-residue polypeptide: Tachyplesin-1 (77 aa).

Positions methionine 1–alanine 23 are cleaved as a signal peptide. 2 cysteine pairs are disulfide-bonded: cysteine 26/cysteine 39 and cysteine 30/cysteine 35. An Arginine amide modification is found at arginine 40. Positions glycine 41 to glutamate 77 are excised as a propeptide.

The protein belongs to the tachyplesin/polyphemusin family. Hemocytes.

It localises to the secreted. Significantly inhibits the growth of Gram-negative and Gram-positive bacteria. This Tachypleus tridentatus (Japanese horseshoe crab) protein is Tachyplesin-1.